A 176-amino-acid chain; its full sequence is NAD(P)H-quinone oxidoreductase subunit 6, chloroplastic (176 aa).

The next 5 membrane-spanning stretches (helical) occupy residues phenylalanine 10–proline 30, proline 32–leucine 52, alanine 61–methionine 81, leucine 92–methionine 112, and phenylalanine 152–serine 172.

This sequence belongs to the complex I subunit 6 family. NDH is composed of at least 16 different subunits, 5 of which are encoded in the nucleus.

The protein localises to the plastid. Its subcellular location is the chloroplast thylakoid membrane. It catalyses the reaction a plastoquinone + NADH + (n+1) H(+)(in) = a plastoquinol + NAD(+) + n H(+)(out). It carries out the reaction a plastoquinone + NADPH + (n+1) H(+)(in) = a plastoquinol + NADP(+) + n H(+)(out). Its function is as follows. NDH shuttles electrons from NAD(P)H:plastoquinone, via FMN and iron-sulfur (Fe-S) centers, to quinones in the photosynthetic chain and possibly in a chloroplast respiratory chain. The immediate electron acceptor for the enzyme in this species is believed to be plastoquinone. Couples the redox reaction to proton translocation, and thus conserves the redox energy in a proton gradient. The polypeptide is NAD(P)H-quinone oxidoreductase subunit 6, chloroplastic (ndhG) (Olimarabidopsis pumila (Dwarf rocket)).